We begin with the raw amino-acid sequence, 395 residues long: Acetate kinase (395 aa).

Mg(2+) is bound at residue Asn-8. Lys-15 lines the ATP pocket. Arg-94 provides a ligand contact to substrate. Asp-151 (proton donor/acceptor) is an active-site residue. ATP contacts are provided by residues 210–214 (HLGNG), 284–286 (DMR), and 329–333 (GIGEN). Glu-382 is a Mg(2+) binding site.

The protein belongs to the acetokinase family. Homodimer. The cofactor is Mg(2+). It depends on Mn(2+) as a cofactor.

The protein resides in the cytoplasm. The enzyme catalyses acetate + ATP = acetyl phosphate + ADP. It participates in metabolic intermediate biosynthesis; acetyl-CoA biosynthesis; acetyl-CoA from acetate: step 1/2. In terms of biological role, catalyzes the formation of acetyl phosphate from acetate and ATP. Can also catalyze the reverse reaction. This Protochlamydia amoebophila (strain UWE25) protein is Acetate kinase.